A 124-amino-acid chain; its full sequence is NADH-quinone oxidoreductase subunit A (124 aa).

3 helical membrane-spanning segments follow: residues 11 to 31 (YLPI…IMIL), 68 to 88 (LVAI…PWAI), and 93 to 113 (IGKI…IGFV).

Belongs to the complex I subunit 3 family. In terms of assembly, NDH-1 is composed of 14 different subunits. Subunits NuoA, H, J, K, L, M, N constitute the membrane sector of the complex.

It is found in the cell inner membrane. The enzyme catalyses a quinone + NADH + 5 H(+)(in) = a quinol + NAD(+) + 4 H(+)(out). Its function is as follows. NDH-1 shuttles electrons from NADH, via FMN and iron-sulfur (Fe-S) centers, to quinones in the respiratory chain. The immediate electron acceptor for the enzyme in this species is believed to be ubiquinone. Couples the redox reaction to proton translocation (for every two electrons transferred, four hydrogen ions are translocated across the cytoplasmic membrane), and thus conserves the redox energy in a proton gradient. In Rickettsia bellii (strain RML369-C), this protein is NADH-quinone oxidoreductase subunit A.